A 297-amino-acid polypeptide reads, in one-letter code: Homoserine kinase (297 aa).

82 to 92 (PVSRGLGSSAA) provides a ligand contact to ATP.

This sequence belongs to the GHMP kinase family. Homoserine kinase subfamily.

It is found in the cytoplasm. The enzyme catalyses L-homoserine + ATP = O-phospho-L-homoserine + ADP + H(+). Its pathway is amino-acid biosynthesis; L-threonine biosynthesis; L-threonine from L-aspartate: step 4/5. In terms of biological role, catalyzes the ATP-dependent phosphorylation of L-homoserine to L-homoserine phosphate. The protein is Homoserine kinase of Clostridium botulinum (strain Langeland / NCTC 10281 / Type F).